The chain runs to 813 residues: MDAAALERDAVQFARLAVQRDHEGRYSGAVFYYKEAAQALIYAEMAGSSLEHIQEKINEYLERVQALHSAVQSKSADPLKSKHQLDLERAHLLVTQAFDEDEKGNVEDAIELYTEAVDLCLKTSYETADKTLQNKLKQLARQALDRAEALSEPLTKPLCKVKATNIKPKPPPTRTHFPLGTNPFQEGPQPFISPQSCDAQGQRYTAEEIEVLRTTSKINGIEYVPFMNIDLRERFAYPMPFCDRCGKLPLSPKQKAMFSKWVRPEDLTNNPTMIYTVSSFSIKQTIVSDCSFVASLAISAAYERRFTKKLITSIIYPQNKDGESEYNPCGKYMVKLHLNGVPRKVIIDDQLPVDHKGELLCSYSNNKSELWVSLIEKAYMKVMGGYDFPGSNSNIDLHALTGWIPERIAMHSDSQTFSKDNSFRMLYQRFHKGDVLITASTGVMTEAEGEKWGLVPTHAYAVLDIREFKGLRFIQLKNPWSHLRWKGRYSENDVKNWTPELQKYLNFDPRTPQKIDNGIFWISWDDLCQYYDVIYLSWNPGLLKESTCIHSTWDAKQGPVKDAYSLANNPQYKLEVQCPQGGAAVWVLLSRHITDKDDFANNREFITMVVYKTDGKKVYYPADPPPYIDGIRINSPHYLTKIKLTTPGTHTFTLVVSQYEKQNTIHYTVRVYSACSFTFSKIPSPYTVSKQINGKWSGQSAGGCGNFQETHKNNPIYQFHIEKSGPLLIELRGPRQYSVGFEVVTVSVVGDPGPHGFQRKSSGDYRCGFCYLELESIPAGIYNIIPSTFLPKQEGPFFLDFNSVIPIKTTQLQ.

Position 1 is an N-acetylmethionine (Met1). Thr95 is modified (phosphothreonine). Positions 232-540 (RERFAYPMPF…YDVIYLSWNP (309 aa)) constitute a Calpain catalytic domain. Residues Cys290, His458, and Asn478 contribute to the active site. Residues 541–701 (GLLKESTCIH…INGKWSGQSA (161 aa)) are domain III. Residues 702 to 813 (GGCGNFQETH…VIPIKTTQLQ (112 aa)) are domain N.

The protein belongs to the peptidase C2 family.

The protein localises to the nucleus. Its function is as follows. Calcium-regulated non-lysosomal thiol-protease. This chain is Calpain-7 (CAPN7), found in Sus scrofa (Pig).